Reading from the N-terminus, the 308-residue chain is Ribonuclease HIII (308 aa).

The 216-residue stretch at 93-308 (MSVLGSDETG…ANTEKARKMI (216 aa)) folds into the RNase H type-2 domain. A divalent metal cation-binding residues include Asp-99, Glu-100, and Asp-204.

This sequence belongs to the RNase HII family. RnhC subfamily. Requires Mn(2+) as cofactor. It depends on Mg(2+) as a cofactor.

The protein localises to the cytoplasm. The enzyme catalyses Endonucleolytic cleavage to 5'-phosphomonoester.. In terms of biological role, endonuclease that specifically degrades the RNA of RNA-DNA hybrids. The chain is Ribonuclease HIII from Lysinibacillus sphaericus (strain C3-41).